Consider the following 396-residue polypeptide: Putative amidohydrolase YhaA (396 aa).

The active site involves D85. The active-site Proton acceptor is E143. Zn(2+) contacts are provided by E144, R182, and H368.

The protein belongs to the peptidase M20A family. Zn(2+) is required as a cofactor. The cofactor is Co(2+).

This chain is Putative amidohydrolase YhaA (yhaA), found in Bacillus subtilis (strain 168).